We begin with the raw amino-acid sequence, 457 residues long: G-protein coupled receptor 135 (457 aa).

The interval 1-26 is disordered; that stretch reads MEEQARPPGRPAASATLQGSAHPGGA. The Extracellular segment spans residues 1–64; it reads MEEQARPPGR…EAAGSRGPAP (64 aa). An N-linked (GlcNAc...) asparagine glycan is attached at N47. The chain crosses the membrane as a helical span at residues 65–85; it reads LLWHGAAVAAQALVLLLIFLL. Over 86–109 the chain is Cytoplasmic; it reads SSLGNCAVMGVIVKHRQLRTVTNA. The chain crosses the membrane as a helical span at residues 110–130; the sequence is FILSLSLSDLLTALLCLPAAF. At 131–156 the chain is on the extracellular side; that stretch reads LDLFAPPGDSGPWRSFCAASRFFSSC. Residues 157 to 177 form a helical membrane-spanning segment; that stretch reads FGIVSTFSVALISLDRYCAIV. Topologically, residues 178-189 are cytoplasmic; the sequence is RPPRDKLGRRRA. The chain crosses the membrane as a helical span at residues 190–210; sequence LQLLAGAWLAALGFSLPWDLL. Residues 211–235 are Extracellular-facing; the sequence is RAPREPPAPQSFHRCLYRTSPDPAQ. The helical transmembrane segment at 236–256 threads the bilayer; sequence LGVAYSVGLVVACYLLPFLLM. The Cytoplasmic portion of the chain corresponds to 257–295; sequence CFCRYHICKTVRLSDVRVRPMTTYARVLRFFSEVRTATT. Residues 296-316 traverse the membrane as a helical segment; that stretch reads VLIMIIFVMCCWGPYCFLVLL. At 317–329 the chain is on the extracellular side; it reads AATRQGQATQAPS. A helical membrane pass occupies residues 330-350; that stretch reads LLNVAAVWLTWANGAINPVIY. Topologically, residues 351-457 are cytoplasmic; sequence AIRNPNISML…HNSETRDSSI (107 aa).

Belongs to the G-protein coupled receptor 1 family. Interacts with MTNR1B. Interacts with ARRB1 and ARRB2 in a spontaneous and agonist-independent manner; leading to the internalization of GPR135 in the endosomal compartment.

It localises to the cell membrane. Its subcellular location is the endosome membrane. Functionally, orphan receptor. Has spontaneous activity for beta-arrestin recruitment. Shows a reciprocal regulatory interaction with the melatonin receptor MTNR1B most likely through receptor heteromerization. The chain is G-protein coupled receptor 135 (Gpr135) from Mus musculus (Mouse).